A 134-amino-acid polypeptide reads, in one-letter code: Transcription antitermination protein NusB (134 aa).

This sequence belongs to the NusB family.

Its function is as follows. Involved in transcription antitermination. Required for transcription of ribosomal RNA (rRNA) genes. Binds specifically to the boxA antiterminator sequence of the ribosomal RNA (rrn) operons. The polypeptide is Transcription antitermination protein NusB (Halalkalibacterium halodurans (strain ATCC BAA-125 / DSM 18197 / FERM 7344 / JCM 9153 / C-125) (Bacillus halodurans)).